Here is a 315-residue protein sequence, read N- to C-terminus: Replication factor C small subunit (315 aa).

43 to 50 (GSPGVGKT) provides a ligand contact to ATP.

It belongs to the activator 1 small subunits family. RfcS subfamily. As to quaternary structure, heteromultimer composed of small subunits (RfcS) and large subunits (RfcL).

Functionally, part of the RFC clamp loader complex which loads the PCNA sliding clamp onto DNA. The polypeptide is Replication factor C small subunit (Methanococcus maripaludis (strain C5 / ATCC BAA-1333)).